A 617-amino-acid chain; its full sequence is MQNYPLLSLINSPEDLRLLNKDQLPQVCNELREYLLESVSRTSGHLASGLGTVELTVALHYIFKTPFDQLIWDVGHQAYPHKILTGRRERMTTIRQKDGIHPFPWREESEFDVLSVGHSSTSISAGLGIAIAAEKENAGRKIICVIGDGAITAGMAFEAMNHAGALHTDMLVILNDNEMSISENVGGLNNHLARIFSGSIYSSLRDSSKKILDTMPPIKNFMKKTEEHMKGVISPISTLFEELGFNYIGPIDGHNIEELIATLSNMKTLKGPQFLHIRTKKGKGYTPAEQDPIGFHGVPKFDYHTGQLPKSTATPTYSQIFGEWLCETAEQDEKLIGITPAMREGSGMVEFSNRFPDQYFDVAIAEQHAVTLAAGLAIGGYKPVVAIYSTFLQRAYDQVIHDVAIQNLPVLFAIDRAGIVGADGPTHQGAFDLSFLRCIPNLIIMAPSNENECRLMLHTGYCCGKPAAVRYPRGNAIGVELEPLRKLEIGKSNLVRQGQDIAILNFGTLLPNALDVAEKLNATVVDMRFVKPLDHERINELAKTHRTLVTLEENTIQGGAGSAVSEVVNIQQHHVNILHLGLPDEFVAQGTQQEVLKELKLDATGIEEQIKNFLRIA.

Thiamine diphosphate contacts are provided by residues His-76 and 117-119 (GHS). A Mg(2+)-binding site is contributed by Asp-148. Thiamine diphosphate contacts are provided by residues 149–150 (GA), Asn-177, Tyr-285, and Glu-366. Asn-177 contributes to the Mg(2+) binding site.

Belongs to the transketolase family. DXPS subfamily. In terms of assembly, homodimer. Requires Mg(2+) as cofactor. Thiamine diphosphate is required as a cofactor.

The enzyme catalyses D-glyceraldehyde 3-phosphate + pyruvate + H(+) = 1-deoxy-D-xylulose 5-phosphate + CO2. The protein operates within metabolic intermediate biosynthesis; 1-deoxy-D-xylulose 5-phosphate biosynthesis; 1-deoxy-D-xylulose 5-phosphate from D-glyceraldehyde 3-phosphate and pyruvate: step 1/1. Functionally, catalyzes the acyloin condensation reaction between C atoms 2 and 3 of pyruvate and glyceraldehyde 3-phosphate to yield 1-deoxy-D-xylulose-5-phosphate (DXP). The chain is 1-deoxy-D-xylulose-5-phosphate synthase from Mannheimia succiniciproducens (strain KCTC 0769BP / MBEL55E).